A 159-amino-acid chain; its full sequence is Phosphodiesterase delta-like protein (159 aa).

This sequence belongs to the PDE6D/unc-119 family.

In Caenorhabditis elegans, this protein is Phosphodiesterase delta-like protein (pdl-1).